The chain runs to 248 residues: Probable phosphatase VFMJ11_A0899 (248 aa).

Zn(2+)-binding residues include His8, His10, His16, His41, Glu74, His101, His131, Asp193, and His195.

Belongs to the PHP family. Requires Zn(2+) as cofactor.

In Aliivibrio fischeri (strain MJ11) (Vibrio fischeri), this protein is Probable phosphatase VFMJ11_A0899.